The primary structure comprises 699 residues: Elongation factor G (699 aa).

A tr-type G domain is found at 8–283; it reads EHIRNIGICA…AVVDFLPSPI (276 aa). GTP-binding positions include 17-24, 81-85, and 135-138; these read AHIDAGKT, DTPGH, and NKMD.

The protein belongs to the TRAFAC class translation factor GTPase superfamily. Classic translation factor GTPase family. EF-G/EF-2 subfamily.

It localises to the cytoplasm. In terms of biological role, catalyzes the GTP-dependent ribosomal translocation step during translation elongation. During this step, the ribosome changes from the pre-translocational (PRE) to the post-translocational (POST) state as the newly formed A-site-bound peptidyl-tRNA and P-site-bound deacylated tRNA move to the P and E sites, respectively. Catalyzes the coordinated movement of the two tRNA molecules, the mRNA and conformational changes in the ribosome. The chain is Elongation factor G from Rickettsia parkeri.